We begin with the raw amino-acid sequence, 55 residues long: Large ribosomal subunit protein bL33 (55 aa).

This sequence belongs to the bacterial ribosomal protein bL33 family.

This chain is Large ribosomal subunit protein bL33, found in Xanthomonas axonopodis pv. citri (strain 306).